The following is a 287-amino-acid chain: MASGREIKSKIKSVQNTRKVTRALEMVSASKIRKAQEQMKISRPYAQAMKQMIGHLAQANTEYLHPFLIAHKQVKRIGYIVISSDRGLAGGLNNNLFRKMLGEMHQWQDNGAEVDIVTIGQKASVFFRRIKVNILGSVTHLGDTPRLEQLIGVIKVMLDAYTEEKLDRVYLVYNHFINTMVQKASFDQLLPLLAAKDKVAHHDWDYLYEPDAATVLEHVMTRYIESLVYQAMLENIASEHAARMVAMKAASDNANKLIGTLQLVYNKARQAAITQEISEIVGGAAAV.

This sequence belongs to the ATPase gamma chain family. As to quaternary structure, F-type ATPases have 2 components, CF(1) - the catalytic core - and CF(0) - the membrane proton channel. CF(1) has five subunits: alpha(3), beta(3), gamma(1), delta(1), epsilon(1). CF(0) has three main subunits: a, b and c.

It is found in the cell inner membrane. Its function is as follows. Produces ATP from ADP in the presence of a proton gradient across the membrane. The gamma chain is believed to be important in regulating ATPase activity and the flow of protons through the CF(0) complex. The chain is ATP synthase gamma chain from Xylella fastidiosa (strain M23).